The primary structure comprises 447 residues: N-succinylarginine dihydrolase (447 aa).

Substrate contacts are provided by residues 19–28 (AGLSFGNEAS), Asn110, and 137–138 (HR). Glu174 is a catalytic residue. Substrate is bound at residue Arg213. His249 is a catalytic residue. Positions 251 and 364 each coordinate substrate. The active-site Nucleophile is the Cys370.

This sequence belongs to the succinylarginine dihydrolase family. In terms of assembly, homodimer.

It carries out the reaction N(2)-succinyl-L-arginine + 2 H2O + 2 H(+) = N(2)-succinyl-L-ornithine + 2 NH4(+) + CO2. Its pathway is amino-acid degradation; L-arginine degradation via AST pathway; L-glutamate and succinate from L-arginine: step 2/5. In terms of biological role, catalyzes the hydrolysis of N(2)-succinylarginine into N(2)-succinylornithine, ammonia and CO(2). In Yersinia pestis bv. Antiqua (strain Antiqua), this protein is N-succinylarginine dihydrolase.